The primary structure comprises 124 residues: MSLLRCRQQTLPSLCLSVLFLACFVASMPTESLTPTPGPENSRWSLVRARVMEMVEPLVTRTRDRWRWFWGPRAIQGFVQTYYEDHLKDLGPRTQAWLQSSRDHLLNKTHSLCPRLLCRDWTQG.

The first 27 residues, methionine 1–serine 27, serve as a signal peptide directing secretion.

The protein belongs to the apolipoprotein C4 family.

It is found in the secreted. Its function is as follows. May participate in lipoprotein metabolism. The sequence is that of Apolipoprotein C-IV (Apoc4) from Rattus norvegicus (Rat).